Consider the following 255-residue polypeptide: ParA family protein CT_582 (255 aa).

Belongs to the ParA family.

The chain is ParA family protein CT_582 from Chlamydia trachomatis serovar D (strain ATCC VR-885 / DSM 19411 / UW-3/Cx).